A 215-amino-acid polypeptide reads, in one-letter code: Cytochrome b6 (215 aa).

The helical transmembrane segment at 32-52 (VFYCFGGMTLTCFLVQLATGF) threads the bilayer. Cysteine 35 provides a ligand contact to heme c. The heme b site is built by histidine 86 and histidine 100. 3 helical membrane-spanning segments follow: residues 90-110 (ASMM…TGGF), 116-136 (LTWI…VTGY), and 186-206 (LHTL…FLMI). Histidine 187 and histidine 202 together coordinate heme b.

It belongs to the cytochrome b family. PetB subfamily. As to quaternary structure, the 4 large subunits of the cytochrome b6-f complex are cytochrome b6, subunit IV (17 kDa polypeptide, PetD), cytochrome f and the Rieske protein, while the 4 small subunits are PetG, PetL, PetM and PetN. The complex functions as a dimer. Requires heme b as cofactor. Heme c serves as cofactor.

The protein resides in the plastid. The protein localises to the chloroplast thylakoid membrane. In terms of biological role, component of the cytochrome b6-f complex, which mediates electron transfer between photosystem II (PSII) and photosystem I (PSI), cyclic electron flow around PSI, and state transitions. This Cyanidium caldarium (Red alga) protein is Cytochrome b6.